The primary structure comprises 299 residues: Fibrinogen silencer-binding protein (299 aa).

Lys94 is covalently cross-linked (Glycyl lysine isopeptide (Lys-Gly) (interchain with G-Cter in SUMO2)). The interval 189–211 (EGSESPSLSSVDMRMTSSPSSVP) is disordered. The span at 192-209 (ESPSLSSVDMRMTSSPSS) shows a compositional bias: polar residues.

In terms of assembly, interacts with APBA1 (via PDZ 1 and 2 domains).

It localises to the nucleus. Transcriptional repressor that down-regulates the expression of the fibrinogen gamma chain. Represses transcription of GSK3B gene promoter via its interaction with APBA1. This Mus musculus (Mouse) protein is Fibrinogen silencer-binding protein (Fsbp).